Reading from the N-terminus, the 398-residue chain is Streptopain (398 aa).

The N-terminal stretch at 1–27 (MNKKKLGIRLLSLLALGGFVLANPVFA) is a signal peptide. Positions 28–145 (DQNFARNEKE…TTYAGTAEIK (118 aa)) are excised as a propeptide. Cys192 serves as the catalytic Nucleophile. The residue at position 192 (Cys192) is a Cysteine methyl disulfide; in zymogen form. Residues Ser282 and Gly339 each contribute to the a protein site. The active-site Proton acceptor is His340. Residues 368-390 (RLDALNPSALGTGGGAGGFNGYQ) are C-terminal active site loop.

The protein belongs to the peptidase C10 family. Monomer. Post-translationally, the mature protease is derived from the precursor sequence by cleavage, either in cis via an autocatalytic mechanism, or in trans by mature SpeB or host proteases (trypsin, plasmin or subtilisin). Maturation can involve a number of protein cleavage intermediates. Mature SpeB probably plays the most important role in protein maturation in physiological conditions. Methylthiolation at Cys-192 of the inactive zymogen form is probably involved in the mechanism of secretion of the proteinase into the culture fluid.

The protein resides in the secreted. It is found in the host extracellular space. The protein localises to the host cytoplasm. The catalysed reaction is Preferential cleavage with hydrophobic residues at P2, P1 and P1'.. Synthesized as an inactive zymogen to protect the intracellular components of the bacteria from proteolytic activity during protein production. Once secreted into the extracellular milieu, cleaved into the active protease: maturation can be mediated in cis by autocatalytic cleavage, or in trans by mature SpeB or host proteases. Protease activity is strongly inhibited by zinc and copper, which prevent its maturation into an active protease: inhibition by metal ions may be required to prevent proteolysis of streptococcal proteins. Cysteine protease that acts as a key streptococcal virulence factor by cleaving host proteins involved in immune response. Triggers inflammation by mediating cleavage of host proteins, which can both promote host pathogenesis by triggering sterile inflammation and/or restrict streptococcal infection, depending on host immune statue and infection site. Cleaves host gasdermin-A (GSDMA) in epithelial cells, promoting GSDMA activation and formation of gasdermin pores, triggering pyroptosis. Pyroptosis triggers the elimination of the infected skin cell, depriving the pathogen of its protective niche, while inducing an inflammatory response. This ultimately prevents bacterial penetration of the epithelial barrier and a subsequent systemic dissemination of the pathogen. Also mediates cleavage of the cytokine precursor interleukin-1 beta (IL1B) to its mature form, resulting in inflammation and septic shock. SpeB-mediated maturation of IL1B plays a dual role depending on infection site: while IL1B inflammatory response prevents bacterial growth during invasive skin infections, it promotes streptococcal infection of the nasopharynx by disrupting colonization resistance mediated by the microbiota. Inhibits host autophagy be catalyzing cleavage and inactivation of key autophagy factors, such as CALCOCO2, NBR1 and SQSTM1. Cleaves and inhibits a number of complement factors, such as C2, C3-beta chain of C3, C4, C5 or SERPING1, thereby promoting evasion of host immunity. May also impair adaptive immunity by catalyzing cleavage and degradation of host immunoglobulins to promote immune system evasion; the relevance of this activity is however unsure in vivo. Catalyzes maturation and release of the peptide hormone bradykinin from the precursor Kininogen-1 (KNG1) to produce hypotension during septic shock. Also involved in bacterial translocation across the host epithelial barrier by mediating cleavage and degradation of host epithelial junction proteins, such as CDH1 and OCLN. Additionally, has been involved in degradation of fibronectin and vitronectin, two host extracellular matrix proteins involved in tissue integrity. Also able to catalyze cleavage and degradation of streptococcal proteins, such as C5a peptidase, EndoS or SmeZ. Degradation of streptococcal proteins is however strictly regulated to preserve integrity of other virulence factors. The sequence is that of Streptopain (speB) from Streptococcus pyogenes serotype M28 (strain MGAS6180).